Reading from the N-terminus, the 250-residue chain is Vitamin B12 import ATP-binding protein BtuD (250 aa).

Residues 3 to 233 (LRQASVLPRL…EVLSPVFGVA (231 aa)) enclose the ABC transporter domain. Residue 29–36 (GPNGAGKS) coordinates ATP.

The protein belongs to the ABC transporter superfamily. Vitamin B12 importer (TC 3.A.1.13.1) family. As to quaternary structure, the complex is composed of two ATP-binding proteins (BtuD), two transmembrane proteins (BtuC) and a solute-binding protein (BtuF).

It localises to the cell inner membrane. The catalysed reaction is an R-cob(III)alamin(out) + ATP + H2O = an R-cob(III)alamin(in) + ADP + phosphate + H(+). Its function is as follows. Part of the ABC transporter complex BtuCDF involved in vitamin B12 import. Responsible for energy coupling to the transport system. This is Vitamin B12 import ATP-binding protein BtuD from Pectobacterium atrosepticum (strain SCRI 1043 / ATCC BAA-672) (Erwinia carotovora subsp. atroseptica).